The following is a 355-amino-acid chain: F-box only protein 32 (355 aa).

The Nuclear localization signal motif lies at 62–67; sequence KKRKKD. The Nuclear export signal motif lies at 169 to 173; that stretch reads LLQTL. An F-box domain is found at 223 to 271; that stretch reads LTFTDLPLCLQLNIMQRLSDGRDLVSLGQVAPDLHVLSEDRLLWKKLCQ. Positions 280 to 295 match the Bipartite nuclear localization signal motif; that stretch reads RKRLILSDKGQLDWKK.

In terms of assembly, part of the SCF (SKP1-CUL1-F-box) E3 ubiquitin-protein ligase complex SCF(FBXO32) formed of CUL1, SKP1, RBX1 and FBXO32.

The protein resides in the cytoplasm. The protein localises to the nucleus. The protein operates within protein modification; protein ubiquitination. In terms of biological role, substrate recognition component of a SCF (SKP1-CUL1-F-box protein) E3 ubiquitin-protein ligase complex which mediates the ubiquitination and subsequent proteasomal degradation of target proteins. Probably recognizes and binds to phosphorylated target proteins during skeletal muscle atrophy. Recognizes TERF1. This chain is F-box only protein 32 (FBXO32), found in Bos taurus (Bovine).